Consider the following 330-residue polypeptide: Ketol-acid reductoisomerase (NADP(+)) (330 aa).

Residues 1–181 form the KARI N-terminal Rossmann domain; that stretch reads MNVYYEQDAD…GGTKAGVIET (181 aa). NADP(+)-binding positions include 24–27, Arg47, Ser50, Ser52, and 82–85; these read YGSQ and DQTQ. His107 is a catalytic residue. Residue Gly133 coordinates NADP(+). A KARI C-terminal knotted domain is found at 182–327; that stretch reads NFKDETETDL…AKLRNMMSWL (146 aa). Asp190, Glu194, Glu226, and Glu230 together coordinate Mg(2+). Ser251 provides a ligand contact to substrate.

The protein belongs to the ketol-acid reductoisomerase family. Requires Mg(2+) as cofactor.

It catalyses the reaction (2R)-2,3-dihydroxy-3-methylbutanoate + NADP(+) = (2S)-2-acetolactate + NADPH + H(+). It carries out the reaction (2R,3R)-2,3-dihydroxy-3-methylpentanoate + NADP(+) = (S)-2-ethyl-2-hydroxy-3-oxobutanoate + NADPH + H(+). It participates in amino-acid biosynthesis; L-isoleucine biosynthesis; L-isoleucine from 2-oxobutanoate: step 2/4. Its pathway is amino-acid biosynthesis; L-valine biosynthesis; L-valine from pyruvate: step 2/4. Involved in the biosynthesis of branched-chain amino acids (BCAA). Catalyzes an alkyl-migration followed by a ketol-acid reduction of (S)-2-acetolactate (S2AL) to yield (R)-2,3-dihydroxy-isovalerate. In the isomerase reaction, S2AL is rearranged via a Mg-dependent methyl migration to produce 3-hydroxy-3-methyl-2-ketobutyrate (HMKB). In the reductase reaction, this 2-ketoacid undergoes a metal-dependent reduction by NADPH to yield (R)-2,3-dihydroxy-isovalerate. The chain is Ketol-acid reductoisomerase (NADP(+)) from Chlorobium luteolum (strain DSM 273 / BCRC 81028 / 2530) (Pelodictyon luteolum).